The primary structure comprises 320 residues: Cytochrome f (320 aa).

A signal peptide spans 1-35; the sequence is MQNRNTFSWVKEQMTRSISVSIIIYVITRTSISNA. Heme contacts are provided by Y36, C56, C59, and H60. Residues 286–306 traverse the membrane as a helical segment; the sequence is VQGLLFFLASIILAQIFLVLK.

This sequence belongs to the cytochrome f family. In terms of assembly, the 4 large subunits of the cytochrome b6-f complex are cytochrome b6, subunit IV (17 kDa polypeptide, petD), cytochrome f and the Rieske protein, while the 4 small subunits are PetG, PetL, PetM and PetN. The complex functions as a dimer. Heme serves as cofactor.

The protein resides in the plastid. Its subcellular location is the chloroplast thylakoid membrane. In terms of biological role, component of the cytochrome b6-f complex, which mediates electron transfer between photosystem II (PSII) and photosystem I (PSI), cyclic electron flow around PSI, and state transitions. The sequence is that of Cytochrome f from Chloranthus spicatus (Chulantree).